Consider the following 273-residue polypeptide: 2-dehydro-3-deoxyphosphooctonate aldolase (273 aa).

This sequence belongs to the KdsA family.

It is found in the cytoplasm. It catalyses the reaction D-arabinose 5-phosphate + phosphoenolpyruvate + H2O = 3-deoxy-alpha-D-manno-2-octulosonate-8-phosphate + phosphate. It participates in carbohydrate biosynthesis; 3-deoxy-D-manno-octulosonate biosynthesis; 3-deoxy-D-manno-octulosonate from D-ribulose 5-phosphate: step 2/3. It functions in the pathway bacterial outer membrane biogenesis; lipopolysaccharide biosynthesis. The protein is 2-dehydro-3-deoxyphosphooctonate aldolase of Nitratidesulfovibrio vulgaris (strain ATCC 29579 / DSM 644 / CCUG 34227 / NCIMB 8303 / VKM B-1760 / Hildenborough) (Desulfovibrio vulgaris).